The primary structure comprises 351 residues: LIM/homeobox protein ceh-14 (351 aa).

2 LIM zinc-binding domains span residues 46 to 105 and 105 to 169; these read AICS…KFGT and TKCS…ARDK. The segment at residues 180 to 239 is a DNA-binding region (homeobox); the sequence is NKRPRTTISAKSLETLKQAYQTSSKPARHVREQLASETGLDMRVVQVWFQNRRAKEKRLK. Basic and acidic residues predominate over residues 238–254; it reads LKKDAGRRWKSSNRAES. Residues 238-268 are disordered; sequence LKKDAGRRWKSSNRAESDSNSPIESINGQSP. The segment covering 255 to 268 has biased composition (polar residues); sequence DSNSPIESINGQSP.

Interacts (via LIM zinc-binding domains 1 and 2) with lim-7 (via LID domain). May interact with itself. May interact with homeobox protein ceh-63. Expressed in the anterior AFDL/R sensory neurons and BDUL/R and ALA interneurons, and in PVT, PVQL/R, DVC, PVNL/R, PVWL/R, PVR, PHCL/R, PHAL/R and PHBL/R cells in the tail region.

It localises to the nucleus. Probable transcription factor, modulating expression of helix-loop-helix protein mbr-1 and homeobox protein ceh-63, perhaps acting in concert with ceh-63. Binds to a motif including the sequence 5'-CTAAT-3' in regulatory promoter elements. Confers thermosensory function to neurons. Required for correct AFD-mediated thermotaxis. In concert with homeobox protein ttx-1, perhaps as components in a complex, specifies identity of AFD neurons, acting by synergistically regulating receptor-type guanylyl cyclase gcy-8, gcy-18 and other genes. Involved in postembryonic differentiation of the ALA neuron, and regulation of genes that contribute to behavioral quiescence, a sleep-like behavior mediated by ALA. Regulates its own expression and also that of homeodomain ceh-17, together forming an autoregulatory loop in the ALA neuron. Required for initial pathfinding of the ALA axons, but largely dispensable for axon migration. Involved in regulating postembryonic axon maintenance in the ventral nerve cord, acting in concert with LIM homeobox protein lim-6, via modulation of expression of immunoglobulin domain zig genes in the interneuron PVT. Plays a role in controlling the peptidergic identity of the BDU neurons, regulating expression of flp-10, nlp-1, and nlp-15, thereby modulating the harsh touch response. This is LIM/homeobox protein ceh-14 (ceh-14) from Caenorhabditis elegans.